The following is a 420-amino-acid chain: Phospholipase A1-II 3 (420 aa).

The first 21 residues, 1 to 21 (MCCFLLVSVLLATTLTDVASA), serve as a signal peptide directing secretion. A glycan (N-linked (GlcNAc...) asparagine) is linked at N231. The Acyl-ester intermediate role is filled by S240. The active-site Charge relay system is the S240. Residue N294 is glycosylated (N-linked (GlcNAc...) asparagine). Catalysis depends on charge relay system residues D305 and H343. Positions 367-388 (VVDRDLALVNKEVDALRDEYQV) form a coiled coil. A glycan (N-linked (GlcNAc...) asparagine) is linked at N403.

The protein belongs to the AB hydrolase superfamily. Lipase family.

Its subcellular location is the secreted. Its function is as follows. Acylhydrolase that catalyzes the hydrolysis of phospholipids at the sn-1 position. The chain is Phospholipase A1-II 3 from Oryza sativa subsp. indica (Rice).